The chain runs to 183 residues: MSSHSQEPVGEENFDDSEYDRPNKSQVKREMHALLDLGKELVELSPERLRQLPLEERLYEAIREAQRTTGREGRRRQIHFVGKLMRSAPAEAIRAQLDTWRNGSREETAAMHRLEALRERLLTDDDALTAVLQRNPDADIQHLRALIRAARKEAAANAALSQGQEPQRKQYRALFQALKNLSA.

A disordered region spans residues 1–27 (MSSHSQEPVGEENFDDSEYDRPNKSQV). Over residues 9-18 (VGEENFDDSE) the composition is skewed to acidic residues.

The protein belongs to the DarP family.

Its subcellular location is the cytoplasm. Functionally, member of a network of 50S ribosomal subunit biogenesis factors which assembles along the 30S-50S interface, preventing incorrect 23S rRNA structures from forming. Promotes peptidyl transferase center (PTC) maturation. The sequence is that of Dual-action ribosomal maturation protein DarP from Bordetella pertussis (strain Tohama I / ATCC BAA-589 / NCTC 13251).